Consider the following 608-residue polypeptide: DNA mismatch repair protein MutL (608 aa).

Belongs to the DNA mismatch repair MutL/HexB family.

This protein is involved in the repair of mismatches in DNA. It is required for dam-dependent methyl-directed DNA mismatch repair. May act as a 'molecular matchmaker', a protein that promotes the formation of a stable complex between two or more DNA-binding proteins in an ATP-dependent manner without itself being part of a final effector complex. In Elusimicrobium minutum (strain Pei191), this protein is DNA mismatch repair protein MutL.